Here is a 496-residue protein sequence, read N- to C-terminus: Probable diguanylate cyclase DgcJ (496 aa).

Transmembrane regions (helical) follow at residues 11 to 31 (FIAASVIVLTSSFLIFELVAS) and 305 to 325 (ILYFITSSWKSVLFWILTALI). A GGDEF domain is found at 374 to 496 (SSVMFIAIDM…VNKQNKNSRS (123 aa)). Position 382 (aspartate 382) interacts with Mg(2+). 3 residues coordinate substrate: asparagine 390, histidine 395, and aspartate 399. Aspartate 425 provides a ligand contact to Mg(2+). Aspartate 425 acts as the Proton acceptor in catalysis.

In terms of assembly, homodimer. Requires Mg(2+) as cofactor.

The protein resides in the cell inner membrane. The enzyme catalyses 2 GTP = 3',3'-c-di-GMP + 2 diphosphate. It participates in purine metabolism; 3',5'-cyclic di-GMP biosynthesis. In terms of biological role, catalyzes the synthesis of cyclic-di-GMP (c-di-GMP) via the condensation of 2 GTP molecules. In Escherichia coli (strain K12), this protein is Probable diguanylate cyclase DgcJ.